A 317-amino-acid chain; its full sequence is 2,3-dihydroxyphenylpropionate/2,3-dihydroxicinnamic acid 1,2-dioxygenase (317 aa).

H115 (proton donor) is an active-site residue. The active-site Proton acceptor is H179.

Belongs to the LigB/MhpB extradiol dioxygenase family. In terms of assembly, homotetramer. The cofactor is Fe(2+).

It carries out the reaction 3-(2,3-dihydroxyphenyl)propanoate + O2 = (2Z,4E)-2-hydroxy-6-oxonona-2,4-dienedioate + H(+). The enzyme catalyses (2E)-3-(2,3-dihydroxyphenyl)prop-2-enoate + O2 = (2Z,4E,7E)-2-hydroxy-6-oxonona-2,4,7-trienedioate + H(+). Its pathway is aromatic compound metabolism; 3-phenylpropanoate degradation. Functionally, catalyzes the non-heme iron(II)-dependent oxidative cleavage of 2,3-dihydroxyphenylpropionic acid and 2,3-dihydroxicinnamic acid into 2-hydroxy-6-ketononadienedioate and 2-hydroxy-6-ketononatrienedioate, respectively. This chain is 2,3-dihydroxyphenylpropionate/2,3-dihydroxicinnamic acid 1,2-dioxygenase, found in Burkholderia vietnamiensis (strain G4 / LMG 22486) (Burkholderia cepacia (strain R1808)).